Reading from the N-terminus, the 132-residue chain is MSKDTIADIITSIRNADMDKKGTVRIASTNITENIIKILLREGFIENVRKHRENNKYLLILTLRHRRNRKGTYRNILKCISRPGLRIYSNYKRIPRILGGIGIVILSTSRGIMTDREARLKGIGGEILCYIW.

The protein belongs to the universal ribosomal protein uS8 family. As to quaternary structure, part of the 30S ribosomal subunit.

Its subcellular location is the plastid. It is found in the chloroplast. Functionally, one of the primary rRNA binding proteins, it binds directly to 16S rRNA central domain where it helps coordinate assembly of the platform of the 30S subunit. The chain is Small ribosomal subunit protein uS8c (rps8) from Drimys granadensis.